The sequence spans 232 residues: Ion-translocating oxidoreductase complex subunit E (232 aa).

6 consecutive transmembrane segments (helical) span residues 18–38, 39–59, 69–89, 93–113, 127–147, and 182–202; these read GLVQ…LTNA, LGLG…VSLV, IPVF…LINA, GLYL…IIIG, AAFD…VLGA, and PFLL…LIAL.

Belongs to the NqrDE/RnfAE family. The complex is composed of six subunits: RnfA, RnfB, RnfC, RnfD, RnfE and RnfG.

It localises to the cell inner membrane. In terms of biological role, part of a membrane-bound complex that couples electron transfer with translocation of ions across the membrane. In Shewanella sp. (strain MR-4), this protein is Ion-translocating oxidoreductase complex subunit E.